We begin with the raw amino-acid sequence, 159 residues long: Ribosomal RNA large subunit methyltransferase H (159 aa).

Residues L76, G108, and 127 to 132 each bind S-adenosyl-L-methionine; that span reads FSNMTF.

This sequence belongs to the RNA methyltransferase RlmH family. Homodimer.

Its subcellular location is the cytoplasm. It catalyses the reaction pseudouridine(1915) in 23S rRNA + S-adenosyl-L-methionine = N(3)-methylpseudouridine(1915) in 23S rRNA + S-adenosyl-L-homocysteine + H(+). Specifically methylates the pseudouridine at position 1915 (m3Psi1915) in 23S rRNA. The protein is Ribosomal RNA large subunit methyltransferase H of Staphylococcus epidermidis (strain ATCC 35984 / DSM 28319 / BCRC 17069 / CCUG 31568 / BM 3577 / RP62A).